The sequence spans 757 residues: Elongation factor G, mitochondrial (757 aa).

The transit peptide at 1–41 (MLERAALLHRLRLPAHSLPFIYNGALFGGAKRSFSATSKRC) directs the protein to the mitochondrion. The region spanning 66–347 (KLLRNIGVSA…AIVDYLPEPS (282 aa)) is the tr-type G domain. Residues 75-82 (AHIDSGKT), 146-150 (DTPGH), and 200-203 (NKMD) each bind GTP.

This sequence belongs to the TRAFAC class translation factor GTPase superfamily. Classic translation factor GTPase family. EF-G/EF-2 subfamily.

The protein localises to the mitochondrion. The protein operates within protein biosynthesis; polypeptide chain elongation. Functionally, mitochondrial GTPase that catalyzes the GTP-dependent ribosomal translocation step during translation elongation. During this step, the ribosome changes from the pre-translocational (PRE) to the post-translocational (POST) state as the newly formed A-site-bound peptidyl-tRNA and P-site-bound deacylated tRNA move to the P and E sites, respectively. Catalyzes the coordinated movement of the two tRNA molecules, the mRNA and conformational changes in the ribosome. This is Elongation factor G, mitochondrial from Eremothecium gossypii (strain ATCC 10895 / CBS 109.51 / FGSC 9923 / NRRL Y-1056) (Yeast).